A 350-amino-acid chain; its full sequence is Meiotic driver wtf30 (350 aa).

The segment at 1–92 (MKNKYYPLRS…RENHSSGTTD (92 aa)) is disordered. A compositionally biased stretch (basic and acidic residues) spans 11–29 (SIDELSTKNDNEIDLEKGP). A compositionally biased stretch (polar residues) spans 57-72 (GANNPNLFNTDESTTP). The next 7 membrane-spanning stretches (helical) occupy residues 97–117 (FLIK…PAVC), 134–154 (WVYF…LWCF), 165–185 (CVKV…IGLF), 190–210 (EMMI…FVYI), 226–246 (CTIS…FWTF), 253–273 (LAKV…TMFL), and 280–300 (WTGC…LFLC).

Belongs to the WTF family. In terms of assembly, homomer. Forms protein aggregates. The two isoforms can interact with each other and with themselves. High sequence similarity is required for their interaction.

Its subcellular location is the spore membrane. It is found in the vacuole membrane. The protein localises to the ascus epiplasm. It localises to the cytoplasm. The protein resides in the endoplasmic reticulum membrane. Promotes unequal transmission of alleles from the parental zygote to progeny spores by acting as poison/antidote system where the poison and antidote proteins are produced from the same locus; the poison component is trans-acting and targets all spores within an ascus whereas the antidote component is spore-specific, leading to poisoning of all progeny that do not inherit the allele. Its function is as follows. Localizes isoform 2 to the vacuole thereby facilitating its degradation. In terms of biological role, forms toxic aggregates that disrupt spore maturation. This chain is Meiotic driver wtf30, found in Schizosaccharomyces kambucha (Fission yeast).